Consider the following 129-residue polypeptide: Glycine cleavage system H protein (129 aa).

In terms of domain architecture, Lipoyl-binding spans 24-106 (EAVVGITEHA…YGAGWLFRIK (83 aa)). The residue at position 65 (K65) is an N6-lipoyllysine.

This sequence belongs to the GcvH family. As to quaternary structure, the glycine cleavage system is composed of four proteins: P, T, L and H. (R)-lipoate is required as a cofactor.

Its function is as follows. The glycine cleavage system catalyzes the degradation of glycine. The H protein shuttles the methylamine group of glycine from the P protein to the T protein. The sequence is that of Glycine cleavage system H protein from Aeromonas salmonicida (strain A449).